An 87-amino-acid chain; its full sequence is Small ribosomal subunit protein bS20 (87 aa).

Residues 1-26 form a disordered region; that stretch reads MANIKSAKKRAIQAEKARKHNASRRS.

It belongs to the bacterial ribosomal protein bS20 family.

Binds directly to 16S ribosomal RNA. This Tolumonas auensis (strain DSM 9187 / NBRC 110442 / TA 4) protein is Small ribosomal subunit protein bS20.